Consider the following 124-residue polypeptide: Chemotaxis protein CheY1 (124 aa).

Positions 2–120 (KLLVVDDSST…VLKEKLEVVL (119 aa)) constitute a Response regulatory domain. D7, D8, D53, and N55 together coordinate Mg(2+). A 4-aspartylphosphate modification is found at D53.

Interacts (when phosphorylated) with FliM. Mg(2+) is required as a cofactor. Post-translationally, phosphorylated by CheAY. Dephosphorylated (inactivated) by CheZ.

Its subcellular location is the cytoplasm. In terms of biological role, chemotactic response regulator protein that modulates the rotation direction of bacterial flagellar motors. Plays an important role in the colonization and infection of Helicobacter pylori. Upon phosphorylation by CheA, interacts with the flagellar motor protein FliM to cause clockwise flagellar rotation and bacterial reversals, as opposed to straight swimming when CheY1 is not phosphorylated. In Helicobacter pylori (strain J99 / ATCC 700824) (Campylobacter pylori J99), this protein is Chemotaxis protein CheY1 (cheY1).